The chain runs to 359 residues: Opine dehydrogenase (359 aa).

Belongs to the lysopine/nopaline/octopine/opine/vitopine dehydrogenases family. In terms of assembly, homodimer.

It carries out the reaction (2S)-2-[(R)-1-carboxyethylamino]pentanoate + NAD(+) + H2O = L-2-aminopentanoate + pyruvate + NADH + H(+). Its function is as follows. In the forward direction also acts on secondary amine dicarboxylates such as N-(1-carboxyethyl)methionine and N-(1-carboxyethyl)phenylalanine. In the reverse direction, the enzyme also acts on neutral amino acids as an amino donor. They include L-amino acids such as 2-aminopentanoic acid, 2-aminobutyric acid, 2-aminohexanoic acid, 3-chloroalanine, O-acetylserine, methionine, isoleucine, valine, phenylalanine, leucine and alanine. This chain is Opine dehydrogenase (odh), found in Arthrobacter sp. (strain 1C).